Consider the following 122-residue polypeptide: Large ribosomal subunit protein bL12 (122 aa).

It belongs to the bacterial ribosomal protein bL12 family. In terms of assembly, homodimer. Part of the ribosomal stalk of the 50S ribosomal subunit. Forms a multimeric L10(L12)X complex, where L10 forms an elongated spine to which 2 to 4 L12 dimers bind in a sequential fashion. Binds GTP-bound translation factors.

Functionally, forms part of the ribosomal stalk which helps the ribosome interact with GTP-bound translation factors. Is thus essential for accurate translation. In Actinobacillus pleuropneumoniae serotype 5b (strain L20), this protein is Large ribosomal subunit protein bL12.